We begin with the raw amino-acid sequence, 96 residues long: Co-chaperonin GroES (96 aa).

It belongs to the GroES chaperonin family. Heptamer of 7 subunits arranged in a ring. Interacts with the chaperonin GroEL.

The protein resides in the cytoplasm. In terms of biological role, together with the chaperonin GroEL, plays an essential role in assisting protein folding. The GroEL-GroES system forms a nano-cage that allows encapsulation of the non-native substrate proteins and provides a physical environment optimized to promote and accelerate protein folding. GroES binds to the apical surface of the GroEL ring, thereby capping the opening of the GroEL channel. The chain is Co-chaperonin GroES from Polynucleobacter necessarius subsp. necessarius (strain STIR1).